A 102-amino-acid polypeptide reads, in one-letter code: Vacuolar ATPase assembly integral membrane protein VMA21 (102 aa).

Topologically, residues 1–30 (MERYDKATLNAAFAPEFRQNEGSLTSTLRT) are cytoplasmic. The chain crosses the membrane as a helical span at residues 31–51 (LLFFTALMITLPVGLYFSSKA). Residues 52–66 (YIFEGTLGMSNRDSY) lie on the Lumenal side of the membrane. Residues 67 to 87 (FYAAIVAVVTVHVVLAMFVYV) traverse the membrane as a helical segment. The Cytoplasmic portion of the chain corresponds to 88–102 (AWSEGTRQWREGKQD).

This sequence belongs to the VMA21 family. Associates with the V0 complex of the vacuolar ATPase (V-ATPase). Interacts with ATP6AP2.

It localises to the endoplasmic reticulum membrane. Its subcellular location is the endoplasmic reticulum-Golgi intermediate compartment membrane. The protein resides in the cytoplasmic vesicle. It is found in the COPII-coated vesicle membrane. In terms of biological role, required for the assembly of the V0 complex of the vacuolar ATPase (V-ATPase) in the endoplasmic reticulum. The polypeptide is Vacuolar ATPase assembly integral membrane protein VMA21 (Gallus gallus (Chicken)).